The primary structure comprises 184 residues: GTP cyclohydrolase 1 (184 aa).

Zn(2+)-binding residues include Cys75, His78, and Cys146.

Belongs to the GTP cyclohydrolase I family. In terms of assembly, toroid-shaped homodecamer, composed of two pentamers of five dimers.

It catalyses the reaction GTP + H2O = 7,8-dihydroneopterin 3'-triphosphate + formate + H(+). It participates in cofactor biosynthesis; 7,8-dihydroneopterin triphosphate biosynthesis; 7,8-dihydroneopterin triphosphate from GTP: step 1/1. This chain is GTP cyclohydrolase 1, found in Pseudoalteromonas translucida (strain TAC 125).